The following is a 331-amino-acid chain: Bifunctional nuclease (331 aa).

The BFN domain maps to 126 to 261; the sequence is CVQNNPRVLR…RIAYNNGLKV (136 aa). The 36-residue stretch at 291 to 326 folds into the UVR domain; it reads EAQEFDLVRNMLVAAVEERYKDAAQYRDQLFMFRAK.

Belongs to the bifunctional nuclease family.

It localises to the nucleus. Its function is as follows. Bifunctional nuclease with both RNase and DNase activities. Involved in basal defense response. Participates in abscisic acid-derived callose deposition following infection by a necrotrophic pathogen. The protein is Bifunctional nuclease (BBD) of Oryza minuta.